Consider the following 189-residue polypeptide: Cell division protein SepF (189 aa).

The span at 152–163 (FQEEPSPSSVMN) shows a compositional bias: polar residues. The tract at residues 152–189 (FQEEPSPSSVMNKDNEGPVSESVMAPEPAWGASVPSAI) is disordered.

The protein belongs to the SepF family. Homodimer. Interacts with FtsZ.

The protein localises to the cytoplasm. Its function is as follows. Cell division protein that is part of the divisome complex and is recruited early to the Z-ring. Probably stimulates Z-ring formation, perhaps through the cross-linking of FtsZ protofilaments. Its function overlaps with FtsA. The protein is Cell division protein SepF of Prochlorococcus marinus (strain SARG / CCMP1375 / SS120).